The sequence spans 1007 residues: Ephrin type-A receptor 10 (1007 aa).

The signal sequence occupies residues 1–22 (METGAGPHPLRLFVCLIPLCLA). Residues 23–565 (LLLGPGRPGT…APGSRDQSPA (543 aa)) lie on the Extracellular side of the membrane. The Eph LBD domain maps to 35-216 (EVILLDSKAS…YYKQCRATVR (182 aa)). The N-linked (GlcNAc...) asparagine glycan is linked to asparagine 311. Disordered stretches follow at residues 323–343 (ARSP…APRD) and 467–486 (PQSV…PGTN). Fibronectin type-III domains are found at residues 340–452 (APRD…TGPG) and 456–554 (EEDE…TPGE). N-linked (GlcNAc...) asparagine glycosylation occurs at asparagine 486. The helical transmembrane segment at 566-586 (VVVTVVTISALLVLGSVMSVL) threads the bilayer. Residues 587-1007 (AIWRRPCDGK…LQLQGQGVQV (421 aa)) lie on the Cytoplasmic side of the membrane. The Protein kinase domain maps to 644–899 (VTLEKSLGAG…PRFSQIHSIL (256 aa)). Residues 932-996 (PSFGSVGAWL…LSGISALQTR (65 aa)) enclose the SAM domain.

Belongs to the protein kinase superfamily. Tyr protein kinase family. Ephrin receptor subfamily. Expressed in the cochlea, in the organ of Corti, spiral ganglion, and stria vascularis.

It is found in the cell membrane. It catalyses the reaction L-tyrosyl-[protein] + ATP = O-phospho-L-tyrosyl-[protein] + ADP + H(+). Functionally, receptor for members of the ephrin-A family. Binds to EFNA3, EFNA4 and EFNA5. The sequence is that of Ephrin type-A receptor 10 (Epha10) from Mus musculus (Mouse).